A 102-amino-acid polypeptide reads, in one-letter code: UPF0751 protein Dhaf_1351 (102 aa).

Belongs to the UPF0751 family.

The sequence is that of UPF0751 protein Dhaf_1351 from Desulfitobacterium hafniense (strain DSM 10664 / DCB-2).